Consider the following 81-residue polypeptide: Trefoil factor 3 (81 aa).

A signal peptide spans 1-22 (METRAFWTTLLLVLVAGSSCKA). The 44-residue stretch at 31–74 (SQCMVPANVRVDCGYPTVTSEQCNNRGCCFDSSIPNVPWCFKPL) folds into the P-type domain. 3 disulfides stabilise this stretch: C33–C59, C43–C58, and C53–C70.

Monomer. Homodimer; disulfide-linked. As to expression, expressed in goblet cells of the intestines, and colon, in paraventricular hypothalamus and supraoptic nuclei. Weakly expressed in gastric epithelial cells (at protein level). Expressed by goblet cells of small and large intestinal epithelia, kidney and stomach. Expressed in the paraventricular hypothalamus, arcuate nucleus and amygdala of the brain. Weakly expressed in gastric epithelial cells.

It is found in the secreted. It localises to the extracellular space. Its subcellular location is the extracellular matrix. The protein localises to the cytoplasm. In terms of biological role, involved in the maintenance and repair of the intestinal mucosa. Promotes the mobility of epithelial cells in healing processes (motogen). In Rattus norvegicus (Rat), this protein is Trefoil factor 3 (Tff3).